The following is a 269-amino-acid chain: Phosphonates import ATP-binding protein PhnC (269 aa).

One can recognise an ABC transporter domain in the interval 8 to 251 (IHLYGASLRH…LLDALYANEQ (244 aa)). 40–47 (GPSGAGKS) contributes to the ATP binding site.

It belongs to the ABC transporter superfamily. Phosphonates importer (TC 3.A.1.9.1) family. The complex is composed of two ATP-binding proteins (PhnC), two transmembrane proteins (PhnE) and a solute-binding protein (PhnD).

The protein localises to the cell inner membrane. It catalyses the reaction phosphonate(out) + ATP + H2O = phosphonate(in) + ADP + phosphate + H(+). Part of the ABC transporter complex PhnCDE involved in phosphonates import. Responsible for energy coupling to the transport system. This Pseudomonas putida (strain ATCC 47054 / DSM 6125 / CFBP 8728 / NCIMB 11950 / KT2440) protein is Phosphonates import ATP-binding protein PhnC.